Here is a 138-residue protein sequence, read N- to C-terminus: Putative membrane protein insertion efficiency factor (138 aa).

The interval 71–138 is disordered; sequence YDPVPGTPEA…GTPSHTRGEN (68 aa). The segment covering 81-113 has biased composition (basic and acidic residues); it reads RQWRELHPETARSKNEPIHDLTDDNPRDHEPAL. The segment covering 123-138 has biased composition (polar residues); it reads PGSTHTGTPSHTRGEN.

This sequence belongs to the UPF0161 family.

The protein resides in the cell membrane. Its function is as follows. Could be involved in insertion of integral membrane proteins into the membrane. This chain is Putative membrane protein insertion efficiency factor, found in Cutibacterium acnes (strain DSM 16379 / KPA171202) (Propionibacterium acnes).